The sequence spans 101 residues: Putative regulatory protein PrgT (101 aa).

Its function is as follows. Might be involved in the expression of prgA, but is not required for activation of the expression of prgB. This is Putative regulatory protein PrgT (prgT) from Enterococcus faecalis (strain ATCC 47077 / OG1RF).